Here is a 275-residue protein sequence, read N- to C-terminus: Large ribosomal subunit protein uL2 (275 aa).

2 disordered regions span residues 24–48 (LTTD…NAGD) and 224–264 (VMNP…NKRT). Positions 31–42 (KPLTKTKQRTGG) are enriched in basic residues.

It belongs to the universal ribosomal protein uL2 family. As to quaternary structure, part of the 50S ribosomal subunit. Forms a bridge to the 30S subunit in the 70S ribosome.

Its function is as follows. One of the primary rRNA binding proteins. Required for association of the 30S and 50S subunits to form the 70S ribosome, for tRNA binding and peptide bond formation. It has been suggested to have peptidyltransferase activity; this is somewhat controversial. Makes several contacts with the 16S rRNA in the 70S ribosome. The chain is Large ribosomal subunit protein uL2 from Koribacter versatilis (strain Ellin345).